The chain runs to 340 residues: uncharacterized protein (340 aa).

The segment at 6–70 (KYEKSSARCW…PQCLTAYRIA (65 aa)) adopts an RING-CH-type zinc-finger fold. Positions 14, 17, 37, 39, 44, 47, 60, and 63 each coordinate Zn(2+). Transmembrane regions (helical) follow at residues 249-269 (EFWI…TKIL), 274-294 (PILL…GNFT), and 300-320 (IIGA…FIAW).

The protein localises to the membrane. This is an uncharacterized protein from Schizosaccharomyces pombe (strain 972 / ATCC 24843) (Fission yeast).